The primary structure comprises 883 residues: Alanine--tRNA ligase (883 aa).

4 residues coordinate Zn(2+): His564, His568, Cys666, and His670.

This sequence belongs to the class-II aminoacyl-tRNA synthetase family. It depends on Zn(2+) as a cofactor.

It is found in the cytoplasm. The catalysed reaction is tRNA(Ala) + L-alanine + ATP = L-alanyl-tRNA(Ala) + AMP + diphosphate. Its function is as follows. Catalyzes the attachment of alanine to tRNA(Ala) in a two-step reaction: alanine is first activated by ATP to form Ala-AMP and then transferred to the acceptor end of tRNA(Ala). Also edits incorrectly charged Ser-tRNA(Ala) and Gly-tRNA(Ala) via its editing domain. The protein is Alanine--tRNA ligase of Synechococcus sp. (strain JA-3-3Ab) (Cyanobacteria bacterium Yellowstone A-Prime).